The chain runs to 141 residues: Large ribosomal subunit protein uL11 (141 aa).

It belongs to the universal ribosomal protein uL11 family. Part of the ribosomal stalk of the 50S ribosomal subunit. Interacts with L10 and the large rRNA to form the base of the stalk. L10 forms an elongated spine to which 2 L12 dimers bind in a sequential fashion forming a pentameric L10(L12)2(L12)2 complex. In stalled/isolated 50S subunits interacts with RqcH. Post-translationally, one or more lysine residues are methylated.

Forms part of the ribosomal stalk which helps the ribosome interact with GTP-bound translation factors. Required to recruit RqcH, which is part of the ribosome quality control system (RQC), to stalled 50S ribosomal subunits. This Bacillus subtilis (strain 168) protein is Large ribosomal subunit protein uL11.